A 248-amino-acid chain; its full sequence is 2,3-bisphosphoglycerate-dependent phosphoglycerate mutase (248 aa).

Substrate is bound by residues 8–15 (RHGESLWN), 21–22 (TG), Arg60, 87–90 (ERHY), Lys98, 114–115 (RR), and 183–184 (GN). Residue His9 is the Tele-phosphohistidine intermediate of the active site. Glu87 (proton donor/acceptor) is an active-site residue.

Belongs to the phosphoglycerate mutase family. BPG-dependent PGAM subfamily.

It catalyses the reaction (2R)-2-phosphoglycerate = (2R)-3-phosphoglycerate. It functions in the pathway carbohydrate degradation; glycolysis; pyruvate from D-glyceraldehyde 3-phosphate: step 3/5. In terms of biological role, catalyzes the interconversion of 2-phosphoglycerate and 3-phosphoglycerate. The protein is 2,3-bisphosphoglycerate-dependent phosphoglycerate mutase of Methanospirillum hungatei JF-1 (strain ATCC 27890 / DSM 864 / NBRC 100397 / JF-1).